Consider the following 164-residue polypeptide: Transcriptional repressor NrdR (164 aa).

The segment at 3–34 (CPKCNYNKSSVVDSRQAEDGNTIRRRRECEKC) is a zinc-finger region. The 91-residue stretch at 49–139 (LLVVKKDGTR…VYKSFKDVDE (91 aa)) folds into the ATP-cone domain.

This sequence belongs to the NrdR family. Zn(2+) is required as a cofactor.

In terms of biological role, negatively regulates transcription of bacterial ribonucleotide reductase nrd genes and operons by binding to NrdR-boxes. This Streptococcus uberis (strain ATCC BAA-854 / 0140J) protein is Transcriptional repressor NrdR.